The primary structure comprises 514 residues: RNA-splicing ligase RtcB homolog (514 aa).

Positions 128, 131, 236, 268, and 362 each coordinate Mn(2+). Position 235-239 (235-239) interacts with GMP; it reads NHYAE. GMP is bound by residues 362–363, 411–414, serine 418, 437–440, and lysine 513; these read HN, GGTM, and HGAG. Residue histidine 437 is the GMP-histidine intermediate of the active site.

Belongs to the RtcB family. Catalytic component of the tRNA-splicing ligase complex. It depends on Mn(2+) as a cofactor.

The enzyme catalyses a 3'-end 3'-phospho-ribonucleotide-RNA + a 5'-end dephospho-ribonucleoside-RNA + GTP = a ribonucleotidyl-ribonucleotide-RNA + GMP + diphosphate. It catalyses the reaction a 3'-end 2',3'-cyclophospho-ribonucleotide-RNA + a 5'-end dephospho-ribonucleoside-RNA + GTP + H2O = a ribonucleotidyl-ribonucleotide-RNA + GMP + diphosphate + H(+). Catalytic subunit of the tRNA-splicing ligase complex that acts by directly joining spliced tRNA halves to mature-sized tRNAs by incorporating the precursor-derived splice junction phosphate into the mature tRNA as a canonical 3',5'-phosphodiester. May act as an RNA ligase with broad substrate specificity, and may function toward other RNAs. The sequence is that of RNA-splicing ligase RtcB homolog from Ostreococcus lucimarinus (strain CCE9901).